Reading from the N-terminus, the 357-residue chain is Arginine kinase (357 aa).

Positions Lys9–Glu91 constitute a Phosphagen kinase N-terminal domain. Position 64–66 (Gly64–Gly66) interacts with L-arginine. The Phosphagen kinase C-terminal domain maps to Tyr119 to Ala356. Residues Ser122 to Arg126 and His185 contribute to the ATP site. Glu225 contributes to the L-arginine binding site. Residue Arg229 participates in ATP binding. Cys271 is an L-arginine binding site. ATP-binding positions include Arg280–His284 and Arg309–Glu314.

The protein belongs to the ATP:guanido phosphotransferase family.

The enzyme catalyses L-arginine + ATP = N(omega)-phospho-L-arginine + ADP + H(+). Catalyzes the reversible transfer of high energy ATP gamma-phosphate group to L-arginine. The polypeptide is Arginine kinase (Polybetes pythagoricus (South American huntsman spider)).